A 208-amino-acid chain; its full sequence is Thymidylate kinase (208 aa).

Residue 10 to 17 (GPEGSGKT) coordinates ATP.

This sequence belongs to the thymidylate kinase family.

It catalyses the reaction dTMP + ATP = dTDP + ADP. Functionally, phosphorylation of dTMP to form dTDP in both de novo and salvage pathways of dTTP synthesis. The polypeptide is Thymidylate kinase (Bacillus cereus (strain AH187)).